A 588-amino-acid chain; its full sequence is Adenine deaminase (588 aa).

This sequence belongs to the metallo-dependent hydrolases superfamily. Adenine deaminase family. As to quaternary structure, homodimer. Mn(2+) serves as cofactor.

It carries out the reaction adenine + H2O + H(+) = hypoxanthine + NH4(+). The polypeptide is Adenine deaminase (Escherichia coli O139:H28 (strain E24377A / ETEC)).